We begin with the raw amino-acid sequence, 452 residues long: Dimethyladenosine transferase 2, mitochondrial (452 aa).

I46, E99, and D125 together coordinate S-adenosyl-L-methionine. Residues 408–452 are disordered; the sequence is ANDEPNLEDGVTLPEEDDAEADEIIEEESPVPATTPVKRRRKASS. The span at 421–436 shows a compositional bias: acidic residues; sequence PEEDDAEADEIIEEES.

Belongs to the class I-like SAM-binding methyltransferase superfamily. rRNA adenine N(6)-methyltransferase family. KsgA subfamily.

It localises to the mitochondrion. Functionally, probable S-adenosyl-L-methionine-dependent methyltransferase which specifically dimethylates mitochondrial 12S rRNA at the conserved stem loop. Also required for basal transcription of mitochondrial DNA. Also regulates mitochondrial DNA copy number. Stimulates transcription independently of the methyltransferase activity. This chain is Dimethyladenosine transferase 2, mitochondrial (mtTFB2), found in Drosophila melanogaster (Fruit fly).